Reading from the N-terminus, the 193-residue chain is Ion-translocating oxidoreductase complex subunit A (193 aa).

6 helical membrane passes run 5 to 25 (ILFFISNILIENFILVKFLGL), 47 to 67 (FVILTSSVLLWCVNFFILLPL), 72 to 92 (LRIIAYMLIVSVSVQFLEIVL), 102 to 122 (LLGIFLPLITTNCTVLAIPLF), 134 to 154 (IFYGLSASLGFALVMIIFSCI), and 167 to 187 (FQGAPIILITVSLISITFMGF).

Belongs to the NqrDE/RnfAE family. As to quaternary structure, the complex is composed of six subunits: RnfA, RnfB, RnfC, RnfD, RnfE and RnfG.

It localises to the cell inner membrane. Part of a membrane-bound complex that couples electron transfer with translocation of ions across the membrane. The protein is Ion-translocating oxidoreductase complex subunit A of Buchnera aphidicola subsp. Acyrthosiphon pisum (strain APS) (Acyrthosiphon pisum symbiotic bacterium).